A 165-amino-acid polypeptide reads, in one-letter code: Chorismate pyruvate-lyase (165 aa).

Positions 77, 115, and 156 each coordinate substrate.

The protein belongs to the UbiC family. In terms of assembly, monomer.

The protein resides in the cytoplasm. It carries out the reaction chorismate = 4-hydroxybenzoate + pyruvate. The protein operates within cofactor biosynthesis; ubiquinone biosynthesis. Functionally, removes the pyruvyl group from chorismate, with concomitant aromatization of the ring, to provide 4-hydroxybenzoate (4HB) for the ubiquinone pathway. The chain is Chorismate pyruvate-lyase from Salmonella typhi.